The chain runs to 343 residues: L-rhamnose-proton symporter (343 aa).

Transmembrane regions (helical) follow at residues 4–24, 38–58, 68–88, 101–121, 137–157, 175–195, 207–227, 254–274, 289–309, and 320–340; these read AIIL…CFYA, WSIG…YLLL, FSIA…IGNI, MGIG…TPIL, TLLG…AGLL, LILA…MDAA, INSL…GAII, LLIT…LQFF, MSWM…GLLL, and VAVL…VGLG.

It belongs to the L-rhamnose transporter (TC 2.A.7.6) family.

It localises to the cell inner membrane. The enzyme catalyses L-rhamnopyranose(in) + H(+)(in) = L-rhamnopyranose(out) + H(+)(out). Its function is as follows. Uptake of L-rhamnose across the cytoplasmic membrane with the concomitant transport of protons into the cell (symport system). The sequence is that of L-rhamnose-proton symporter from Yersinia pestis bv. Antiqua (strain Antiqua).